The following is a 276-amino-acid chain: HTH-type transcriptional activator RhaR (276 aa).

An HTH araC/xylS-type domain is found at 174–272 (ESLFSALNQS…SCTPTEYRSR (99 aa)). 2 consecutive DNA-binding regions (H-T-H motif) follow at residues 191-212 (ADFC…KQQT) and 239-262 (VANI…GKTF).

Binds DNA as a dimer.

It localises to the cytoplasm. In terms of biological role, activates expression of the rhaSR operon in response to L-rhamnose. The sequence is that of HTH-type transcriptional activator RhaR from Mannheimia succiniciproducens (strain KCTC 0769BP / MBEL55E).